A 382-amino-acid chain; its full sequence is Protein PEP-RELATED DEVELOPMENT ARRESTED 1 homolog, chloroplastic (382 aa).

A chloroplast-targeting transit peptide spans 1–44 (MAILPLSISHSLTSALSATSSGIGRPVARLLHPRVPSRPTVICL).

It is found in the plastid. The protein localises to the chloroplast stroma. Its subcellular location is the chloroplast nucleoid. Functionally, plays an essential role in early steps of chloroplast development. May be involved in the redox control of plastid gene expression by maintening the redox state around chloroplast nucleoids. May positively regulate plastid-encoded RNA polymerase (PEP) activity. The polypeptide is Protein PEP-RELATED DEVELOPMENT ARRESTED 1 homolog, chloroplastic (Oryza sativa subsp. japonica (Rice)).